A 403-amino-acid chain; its full sequence is Acetate kinase (403 aa).

N13 is a binding site for Mg(2+). K20 lines the ATP pocket. Substrate is bound at residue R94. The active-site Proton donor/acceptor is D153. Residues H213–G217, D288–R290, and G336–N340 contribute to the ATP site. E390 serves as a coordination point for Mg(2+).

Belongs to the acetokinase family. Homodimer. The cofactor is Mg(2+). It depends on Mn(2+) as a cofactor.

Its subcellular location is the cytoplasm. The catalysed reaction is acetate + ATP = acetyl phosphate + ADP. It functions in the pathway metabolic intermediate biosynthesis; acetyl-CoA biosynthesis; acetyl-CoA from acetate: step 1/2. Functionally, catalyzes the formation of acetyl phosphate from acetate and ATP. Can also catalyze the reverse reaction. The polypeptide is Acetate kinase (Buchnera aphidicola subsp. Schizaphis graminum (strain Sg)).